The sequence spans 320 residues: 3-hydroxybenzoate 6-hydroxylase 2 (320 aa).

Positions 1–25 (MRSTNTRSARSRPTKRSVNASATPT) are disordered. A compositionally biased stretch (polar residues) spans 16–25 (RSVNASATPT).

It belongs to the 3-hydroxybenzoate 6-hydroxylase family. The cofactor is FAD.

It catalyses the reaction 3-hydroxybenzoate + NADH + O2 + H(+) = 2,5-dihydroxybenzoate + NAD(+) + H2O. Functionally, catalyzes the conversion of 3-hydroxybenzoate to gentisate. The protein is 3-hydroxybenzoate 6-hydroxylase 2 (hbzD) of Aquipseudomonas alcaligenes (Pseudomonas alcaligenes).